A 570-amino-acid polypeptide reads, in one-letter code: Urease subunit alpha 1 (570 aa).

Residues 131–570 (GGIDTHVHFI…VPMAQRYFLF (440 aa)) enclose the Urease domain. Residues His-136, His-138, and Lys-219 each coordinate Ni(2+). At Lys-219 the chain carries N6-carboxylysine. His-221 serves as a coordination point for substrate. Positions 248 and 274 each coordinate Ni(2+). His-322 functions as the Proton donor in the catalytic mechanism. Residue Asp-362 coordinates Ni(2+).

The protein belongs to the metallo-dependent hydrolases superfamily. Urease alpha subunit family. As to quaternary structure, heterotrimer of UreA (gamma), UreB (beta) and UreC (alpha) subunits. Three heterotrimers associate to form the active enzyme. The cofactor is Ni cation. In terms of processing, carboxylation allows a single lysine to coordinate two nickel ions.

It localises to the cytoplasm. The enzyme catalyses urea + 2 H2O + H(+) = hydrogencarbonate + 2 NH4(+). The protein operates within nitrogen metabolism; urea degradation; CO(2) and NH(3) from urea (urease route): step 1/1. This is Urease subunit alpha 1 from Brucella melitensis biotype 1 (strain ATCC 23456 / CCUG 17765 / NCTC 10094 / 16M).